A 626-amino-acid chain; its full sequence is (+)-3-carene synthase 2, chloroplastic (626 aa).

A chloroplast-targeting transit peptide spans 1–45 (MSLISAVPLASSCVSKSLISSVREHTALRRAIATLQMSRRGKSVA). Mg(2+) contacts are provided by Asp-377, Asp-381, and Asp-529. The DDXXD motif signature appears at 377–381 (DDMYD).

Belongs to the terpene synthase family. Tpsd subfamily. Mg(2+) is required as a cofactor. It depends on Mn(2+) as a cofactor.

The protein localises to the plastid. The protein resides in the chloroplast. The catalysed reaction is (2E)-geranyl diphosphate = (+)-car-3-ene + diphosphate. It participates in terpene metabolism; oleoresin biosynthesis. The protein operates within secondary metabolite biosynthesis; terpenoid biosynthesis. Functionally, monoterpene synthase (TPS) involved in the biosynthesis of monoterpene natural products included in conifer oleoresin secretions and volatile emissions; these compounds contribute to biotic and abiotic stress defense against herbivores and pathogens. Catalyzes the conversion of (2E)-geranyl diphosphate (GPP) to (+)-3-carene. This is (+)-3-carene synthase 2, chloroplastic from Pinus banksiana (Jack pine).